The chain runs to 160 residues: Major pollen allergen Bet v 1-F/I (160 aa).

Brassinolide-binding residues include K55, Y82, Y84, and N101.

The protein belongs to the BetVI family.

The protein resides in the cytoplasm. Functionally, may be a general steroid carrier protein. The chain is Major pollen allergen Bet v 1-F/I (BETV1F) from Betula pendula (European white birch).